We begin with the raw amino-acid sequence, 159 residues long: Gigasin-1 (159 aa).

2 disordered regions span residues 1–33 (GKATTKKVEIPERDRYDNGYDNHGHDDFEHDQT) and 80–159 (KESY…KYRR).

Component of the organic matrix of calcified shell layers.

This chain is Gigasin-1, found in Magallana gigas (Pacific oyster).